Consider the following 761-residue polypeptide: Disintegrin and metalloproteinase domain-containing protein 24 (761 aa).

An N-terminal signal peptide occupies residues 1-34 (MVAMSEALVHARITLLQAWLRMLLFSSVWPPTWC). Residues 35-200 (AEYKGPPETV…GKSTRMQSIY (166 aa)) constitute a propeptide that is removed on maturation. Over 35–697 (AEYKGPPETV…SKKDAPEKPN (663 aa)) the chain is Extracellular. Asn140 carries N-linked (GlcNAc...) asparagine glycosylation. A Cysteine switch motif is present at residues 172-179 (MRCGLTDE). Residue Cys174 coordinates Zn(2+). The Peptidase M12B domain maps to 208-400 (LYIKLALVID…KSCIHREPRP (193 aa)). Residues Asn227 and Asn301 are each glycosylated (N-linked (GlcNAc...) asparagine). Cystine bridges form between Cys323–Cys393, Cys357–Cys379, Cys359–Cys364, Cys465–Cys485, Cys635–Cys646, Cys640–Cys652, and Cys654–Cys663. Residue His342 participates in Zn(2+) binding. Glu343 is a catalytic residue. Zn(2+)-binding residues include His346 and His352. Asn378, Asn390, and Asn479 each carry an N-linked (GlcNAc...) asparagine glycan. Positions 406–493 (LKVCGNGIVE…ECPEDLFVQD (88 aa)) constitute a Disintegrin domain. The region spanning 631-664 (WVNDCTPETCNMKGVCNNKQHCHCDVGWSPPNCQ) is the EGF-like domain. Residues 698 to 718 (VIIWLLPIICVAVVLSVLFCL) traverse the membrane as a helical segment. Over 719 to 761 (SGATKKSREAAASQPAEERVKPPYEGAEPSYETVKPPDEWANP) the chain is Cytoplasmic. The interval 725 to 761 (SREAAASQPAEERVKPPYEGAEPSYETVKPPDEWANP) is disordered.

In terms of assembly, monomer. Requires Zn(2+) as cofactor. In terms of processing, the prodomain is removed during sperm passage through the caput epididymis after the protein has reached the cell surface. Not processed in the secretory pathway. Expressed exclusively in testis and more specifically on the surface of mature sperm (at protein level).

It localises to the membrane. Plasma membrane protease present on mature sperm that may be involved in sperm function during epididymal maturation and/or fertilization. The chain is Disintegrin and metalloproteinase domain-containing protein 24 from Mus musculus (Mouse).